The primary structure comprises 602 residues: Pentatricopeptide repeat-containing protein At3g04760, chloroplastic (602 aa).

The N-terminal 78 residues, 1 to 78 (MTPLSSELVG…TDATLPTERR (78 aa)), are a transit peptide targeting the chloroplast. Residues 42 to 64 (FSNSNPNNDNGRSFSSSGARNLQ) are compositionally biased toward polar residues. Positions 42-85 (FSNSNPNNDNGRSFSSSGARNLQTTTTTDATLPTERRQQHSQSL) are disordered. Residues 65-74 (TTTTTDATLP) are compositionally biased toward low complexity. 14 PPR repeats span residues 88–122 (RDTQMLKIFHRSCRSGNYIESLHLLETMVRKGYNP), 123–153 (DVILCTKLIKGFFTLRNIPKAVRVMEILEKF), 157–191 (DVFAYNALINGFCKMNRIDDATRVLDRMRSKDFSP), 192–226 (DTVTYNIMIGSLCSRGKLDLALKVLNQLLSDNCQP), 227–261 (TVITYTILIEATMLEGGVDEALKLMDEMLSRGLKP), 262–296 (DMFTYNTIIRGMCKEGMVDRAFEMVRNLELKGCEP), 297–331 (DVISYNILLRALLNQGKWEEGEKLMTKMFSEKCDP), 332–366 (NVVTYSILITTLCRDGKIEEAMNLLKLMKEKGLTP), 367–401 (DAYSYDPLIAAFCREGRLDVAIEFLETMISDGCLP), 402–436 (DIVNYNTVLATLCKNGKADQALEIFGKLGEVGCSP), 437–471 (NSSSYNTMFSALWSSGDKIRALHMILEMMSNGIDP), 472–506 (DEITYNSMISCLCREGMVDEAFELLVDMRSCEFHP), 507–541 (SVVTYNIVLLGFCKAHRIEDAINVLESMVGNGCRP), and 542–576 (NETTYTVLIEGIGFAGYRAEAMELANDLVRIDAIS).

Belongs to the PPR family. P subfamily.

The protein localises to the plastid. It localises to the chloroplast. The chain is Pentatricopeptide repeat-containing protein At3g04760, chloroplastic from Arabidopsis thaliana (Mouse-ear cress).